A 159-amino-acid polypeptide reads, in one-letter code: MFTIKTDDLTHPAVQALVAYHISGMLQQSPPESSHALDVQKLRNPTVTFWSVWEGEQLAGIGALKLLDDKHGELKSMRTAPNYLRRGVASLILRHILQVAQDRCLHRLSLETGTQAGFTACHQLYLKHGFADCEPFADYRLDPHSRFLSLTLCENNELP.

The N-acetyltransferase domain occupies Ile-4 to Cys-153.

It belongs to the acetyltransferase family.

This is an uncharacterized protein from Escherichia coli (strain K12).